The chain runs to 552 residues: Arginine--tRNA ligase (552 aa).

Positions 130–140 match the 'HIGH' region motif; the sequence is ANPTGPLSIGH.

The protein belongs to the class-I aminoacyl-tRNA synthetase family. Monomer.

The protein localises to the cytoplasm. It carries out the reaction tRNA(Arg) + L-arginine + ATP = L-arginyl-tRNA(Arg) + AMP + diphosphate. This is Arginine--tRNA ligase from Desulfotalea psychrophila (strain LSv54 / DSM 12343).